Consider the following 458-residue polypeptide: Putative long chain fatty acid-CoA ligase VraA (458 aa).

This sequence belongs to the ATP-dependent AMP-binding enzyme family.

This chain is Putative long chain fatty acid-CoA ligase VraA (vraA), found in Staphylococcus aureus (strain MRSA252).